A 358-amino-acid chain; its full sequence is Peptide chain release factor 1 (358 aa).

Residue glutamine 235 is modified to N5-methylglutamine.

This sequence belongs to the prokaryotic/mitochondrial release factor family. In terms of processing, methylated by PrmC. Methylation increases the termination efficiency of RF1.

The protein resides in the cytoplasm. In terms of biological role, peptide chain release factor 1 directs the termination of translation in response to the peptide chain termination codons UAG and UAA. This is Peptide chain release factor 1 from Neisseria gonorrhoeae (strain NCCP11945).